Consider the following 216-residue polypeptide: Pyrophosphatase PpaX (216 aa).

D9 serves as the catalytic Nucleophile.

Belongs to the HAD-like hydrolase superfamily. PpaX family. Mg(2+) serves as cofactor.

The catalysed reaction is diphosphate + H2O = 2 phosphate + H(+). In terms of biological role, hydrolyzes pyrophosphate formed during P-Ser-HPr dephosphorylation by HPrK/P. Might play a role in controlling the intracellular pyrophosphate pool. In Bacillus cereus (strain B4264), this protein is Pyrophosphatase PpaX.